The chain runs to 221 residues: MCPLRSLLLISTLVLLHHLPHLSLGRSLPTTTAGPGTSCLDYSQNLLRAVSNTLQKARQTLEFYSCTSEEIDHEDITKDKTSTVEACLPLELATNESCLASRETSLITNGHCLSSGKTSFMTTLCLRSIYKDLKMYHMEFQAMNAKLLMDPKRQVFLDQNMLAAIAELMQALNFDSETVPQKPSLEELDFYKTKVKLCILLHAFRIRAVTIDRMMSYLSSS.

Residues 1-25 form the signal peptide; sequence MCPLRSLLLISTLVLLHHLPHLSLG. 3 disulfides stabilise this stretch: C39/C112, C66/C198, and C87/C125. N95 carries an N-linked (GlcNAc...) asparagine glycan.

It belongs to the IL-6 superfamily. In terms of assembly, heterodimer with IL12B; disulfide-linked. This heterodimer is known as interleukin IL-12. Heterodimer with EBI3/IL27B; not disulfide-linked. This heterodimer is known as interleukin IL-35. Interacts with NBR1; this interaction promotes IL-12 secretion.

The protein localises to the secreted. Functionally, heterodimerizes with IL12B to form the IL-12 cytokine or with EBI3/IL27B to form the IL-35 cytokine. IL-12 is primarily produced by professional antigen-presenting cells (APCs) such as B-cells and dendritic cells (DCs) as well as macrophages and granulocytes and regulates T-cell and natural killer-cell responses, induces the production of interferon-gamma (IFN-gamma), favors the differentiation of T-helper 1 (Th1) cells and is an important link between innate resistance and adaptive immunity. Mechanistically, exerts its biological effects through a receptor composed of IL12R1 and IL12R2 subunits. Binding to the receptor results in the rapid tyrosine phosphorylation of a number of cellular substrates including the JAK family kinases TYK2 and JAK2. In turn, recruited STAT4 gets phosphorylated and translocates to the nucleus where it regulates cytokine/growth factor responsive genes. As part of IL-35, plays essential roles in maintaining the immune homeostasis of the liver microenvironment and also functions as an immune-suppressive cytokine. Mediates biological events through unconventional receptors composed of IL12RB2 and gp130/IL6ST heterodimers or homodimers. Signaling requires the transcription factors STAT1 and STAT4, which form a unique heterodimer that binds to distinct DNA sites. The sequence is that of Interleukin-12 subunit alpha (IL12A) from Ovis aries (Sheep).